A 404-amino-acid polypeptide reads, in one-letter code: Endophilin-B2 (404 aa).

At Met-1 the chain carries N-acetylmethionine. The interval 1 to 27 (MDFNMKKLASDAGIFFTRAVQFTEEKF) is membrane-binding amphipathic helix. Position 10 is a phosphoserine (Ser-10). Residues 24-291 (EEKFGQAEKT…LGSSQGAIFP (268 aa)) form the BAR domain. Residues 209–239 (SASALWNDEVDKAEQELRAAQTEFDRQAEVT) adopt a coiled-coil conformation. Positions 344 to 404 (SGTRKARVLY…VPVTYLELLS (61 aa)) constitute an SH3 domain. Residue Ser-404 is modified to Phosphoserine.

The protein belongs to the endophilin family. In terms of assembly, homodimer, and heterodimer with SH3GLB1.

The protein localises to the cytoplasm. This is Endophilin-B2 from Rattus norvegicus (Rat).